A 239-amino-acid chain; its full sequence is Large ribosomal subunit protein uL3 (239 aa).

2 disordered regions span residues 140 to 164 and 211 to 239; these read SHRS…KMPG and PLPK…QEGA. N5-methylglutamine is present on Gln-151.

The protein belongs to the universal ribosomal protein uL3 family. Part of the 50S ribosomal subunit. Forms a cluster with proteins L14 and L19. Post-translationally, methylated by PrmB.

Functionally, one of the primary rRNA binding proteins, it binds directly near the 3'-end of the 23S rRNA, where it nucleates assembly of the 50S subunit. The sequence is that of Large ribosomal subunit protein uL3 from Bradyrhizobium sp. (strain ORS 278).